The sequence spans 372 residues: NAD(P)H-quinone oxidoreductase subunit 1, chloroplastic (372 aa).

8 helical membrane-spanning segments follow: residues I28–I48, P65–L85, W97–V117, I128–I148, A166–M186, F254–V274, G312–L332, and F352–L372.

It belongs to the complex I subunit 1 family. In terms of assembly, NDH is composed of at least 16 different subunits, 5 of which are encoded in the nucleus.

It is found in the plastid. The protein resides in the chloroplast thylakoid membrane. It carries out the reaction a plastoquinone + NADH + (n+1) H(+)(in) = a plastoquinol + NAD(+) + n H(+)(out). It catalyses the reaction a plastoquinone + NADPH + (n+1) H(+)(in) = a plastoquinol + NADP(+) + n H(+)(out). In terms of biological role, NDH shuttles electrons from NAD(P)H:plastoquinone, via FMN and iron-sulfur (Fe-S) centers, to quinones in the photosynthetic chain and possibly in a chloroplast respiratory chain. The immediate electron acceptor for the enzyme in this species is believed to be plastoquinone. Couples the redox reaction to proton translocation, and thus conserves the redox energy in a proton gradient. The chain is NAD(P)H-quinone oxidoreductase subunit 1, chloroplastic from Staurastrum punctulatum (Green alga).